The sequence spans 257 residues: NAD kinase (257 aa).

Aspartate 44 serves as the catalytic Proton acceptor. NAD(+)-binding positions include 44–45 (DG), arginine 49, 116–117 (NE), aspartate 146, alanine 154, and 157–162 (TAYNLS).

This sequence belongs to the NAD kinase family. The cofactor is a divalent metal cation.

It localises to the cytoplasm. It catalyses the reaction NAD(+) + ATP = ADP + NADP(+) + H(+). Functionally, involved in the regulation of the intracellular balance of NAD and NADP, and is a key enzyme in the biosynthesis of NADP. Catalyzes specifically the phosphorylation on 2'-hydroxyl of the adenosine moiety of NAD to yield NADP. The protein is NAD kinase of Rhizorhabdus wittichii (strain DSM 6014 / CCUG 31198 / JCM 15750 / NBRC 105917 / EY 4224 / RW1) (Sphingomonas wittichii).